We begin with the raw amino-acid sequence, 168 residues long: MLAVYPGSFDPITLGHLDIIERGARLFSEVIVAIAHNPQKKALFSVGQRIKQVQAATSHLKNVRVDTFDGLTVEYARSQRARVLLRGLRVLSDFEYELQMSHTNKSLWPEIETVFLTTSNEYSFLSSSLVKEIARFGGNVRHLVPANVAKDLEACFTQTPIPSQRPLE.

Ser-8 is a binding site for substrate. Residues 8-9 (SF) and His-16 contribute to the ATP site. Substrate-binding residues include Lys-40, Thr-72, and Arg-86. ATP is bound by residues 87–89 (GLR), Glu-97, and 122–128 (YSFLSSS).

Belongs to the bacterial CoaD family. In terms of assembly, homohexamer. It depends on Mg(2+) as a cofactor.

The protein localises to the cytoplasm. It catalyses the reaction (R)-4'-phosphopantetheine + ATP + H(+) = 3'-dephospho-CoA + diphosphate. Its pathway is cofactor biosynthesis; coenzyme A biosynthesis; CoA from (R)-pantothenate: step 4/5. Reversibly transfers an adenylyl group from ATP to 4'-phosphopantetheine, yielding dephospho-CoA (dPCoA) and pyrophosphate. The polypeptide is Phosphopantetheine adenylyltransferase (Thermosynechococcus vestitus (strain NIES-2133 / IAM M-273 / BP-1)).